Here is a 473-residue protein sequence, read N- to C-terminus: Photosystem II CP43 reaction center protein (473 aa).

The propeptide occupies 1-14 (MKTLYSLRRFYPVE). Residue Thr-15 is modified to N-acetylthreonine. Thr-15 carries the phosphothreonine modification. The next 5 helical transmembrane spans lie at 69–93 (LFEV…PHLA), 134–155 (LLGP…KDRN), 178–200 (KALY…RKIT), 255–275 (KPFA…LSYS), and 291–312 (WFNN…ASQA). A [CaMn4O5] cluster-binding site is contributed by Glu-367. The chain crosses the membrane as a helical span at residues 447-471 (RARAAAAGFEKGIDRDFEPVLSMTP).

This sequence belongs to the PsbB/PsbC family. PsbC subfamily. In terms of assembly, PSII is composed of 1 copy each of membrane proteins PsbA, PsbB, PsbC, PsbD, PsbE, PsbF, PsbH, PsbI, PsbJ, PsbK, PsbL, PsbM, PsbT, PsbX, PsbY, PsbZ, Psb30/Ycf12, at least 3 peripheral proteins of the oxygen-evolving complex and a large number of cofactors. It forms dimeric complexes. The cofactor is Binds multiple chlorophylls and provides some of the ligands for the Ca-4Mn-5O cluster of the oxygen-evolving complex. It may also provide a ligand for a Cl- that is required for oxygen evolution. PSII binds additional chlorophylls, carotenoids and specific lipids..

It localises to the plastid. It is found in the chloroplast thylakoid membrane. In terms of biological role, one of the components of the core complex of photosystem II (PSII). It binds chlorophyll and helps catalyze the primary light-induced photochemical processes of PSII. PSII is a light-driven water:plastoquinone oxidoreductase, using light energy to abstract electrons from H(2)O, generating O(2) and a proton gradient subsequently used for ATP formation. The sequence is that of Photosystem II CP43 reaction center protein from Gossypium hirsutum (Upland cotton).